We begin with the raw amino-acid sequence, 258 residues long: Regulatory protein RecX (258 aa).

Belongs to the RecX family.

The protein resides in the cytoplasm. Its function is as follows. Modulates RecA activity. In Streptococcus thermophilus (strain CNRZ 1066), this protein is Regulatory protein RecX.